The chain runs to 646 residues: Translation initiation factor IF-2 (646 aa).

The tr-type G domain occupies 146–315 (PRPPVVTVMG…LLVAEMEELR (170 aa)). The segment at 155–162 (GHVDHGKT) is G1. 155–162 (GHVDHGKT) lines the GTP pocket. The segment at 180–184 (GITQH) is G2. The interval 201 to 204 (DTPG) is G3. GTP-binding positions include 201–205 (DTPGH) and 255–258 (NKID). A G4 region spans residues 255–258 (NKID). The segment at 291–293 (SAK) is G5.

The protein belongs to the TRAFAC class translation factor GTPase superfamily. Classic translation factor GTPase family. IF-2 subfamily.

The protein localises to the cytoplasm. In terms of biological role, one of the essential components for the initiation of protein synthesis. Protects formylmethionyl-tRNA from spontaneous hydrolysis and promotes its binding to the 30S ribosomal subunits. Also involved in the hydrolysis of GTP during the formation of the 70S ribosomal complex. This chain is Translation initiation factor IF-2, found in Clostridioides difficile (strain 630) (Peptoclostridium difficile).